A 183-amino-acid chain; its full sequence is MVGIRQYGVFTWVFRTFQLAIDTIVLALASALVNQQTSGGSPGKINFSVAVGSFAILTFFLTAVGRFLPTILGNPWLIAFYDFVNWVFALTGGCCIAVAIRVHACDNQKYLDRNHYTQGSMRRCQELKALCFFLWFMFGLYVASFIVQIFIAKNDTPNYTFRGRGRGKGSGPAVAPRPVMSAV.

Topologically, residues 1–8 (MVGIRQYG) are cytoplasmic. The helical transmembrane segment at 9–29 (VFTWVFRTFQLAIDTIVLALA) threads the bilayer. Topologically, residues 30 to 44 (SALVNQQTSGGSPGK) are extracellular. A helical membrane pass occupies residues 45 to 65 (INFSVAVGSFAILTFFLTAVG). The Cytoplasmic portion of the chain corresponds to 66 to 75 (RFLPTILGNP). The chain crosses the membrane as a helical span at residues 76–96 (WLIAFYDFVNWVFALTGGCCI). At 97–131 (AVAIRVHACDNQKYLDRNHYTQGSMRRCQELKALC) the chain is on the extracellular side. Residues 132–152 (FFLWFMFGLYVASFIVQIFIA) traverse the membrane as a helical segment. The Cytoplasmic segment spans residues 153-183 (KNDTPNYTFRGRGRGKGSGPAVAPRPVMSAV). The disordered stretch occupies residues 163 to 183 (GRGRGKGSGPAVAPRPVMSAV).

This sequence belongs to the NCE102 family.

It localises to the cytoplasm. The protein localises to the golgi apparatus membrane. It is found in the cell membrane. Its function is as follows. Involved in membrane organization and might act as a sensor of sphingolipids that regulates plasma membrane function. Involved in a novel pathway of export of proteins that lack a cleavable signal sequence. This is Non-classical export protein 2 homolog (fhn1) from Schizosaccharomyces pombe (strain 972 / ATCC 24843) (Fission yeast).